A 284-amino-acid chain; its full sequence is Bifunctional protein FolD (284 aa).

Residues G163–S165 and S188 contribute to the NADP(+) site.

This sequence belongs to the tetrahydrofolate dehydrogenase/cyclohydrolase family. In terms of assembly, homodimer.

The catalysed reaction is (6R)-5,10-methylene-5,6,7,8-tetrahydrofolate + NADP(+) = (6R)-5,10-methenyltetrahydrofolate + NADPH. It catalyses the reaction (6R)-5,10-methenyltetrahydrofolate + H2O = (6R)-10-formyltetrahydrofolate + H(+). Its pathway is one-carbon metabolism; tetrahydrofolate interconversion. In terms of biological role, catalyzes the oxidation of 5,10-methylenetetrahydrofolate to 5,10-methenyltetrahydrofolate and then the hydrolysis of 5,10-methenyltetrahydrofolate to 10-formyltetrahydrofolate. This is Bifunctional protein FolD from Lactococcus lactis subsp. lactis (strain IL1403) (Streptococcus lactis).